Reading from the N-terminus, the 139-residue chain is Diuretic hormone 41 (139 aa).

The first 20 residues, 1 to 20 (MMWWALWCAVVVAAGSGVAA), serve as a signal peptide directing secretion. Positions 21-79 (APAPDSLSPLDMVQMDSSAPDDETLYAMSPMAARYSAGAPWLYLLADMPRDSQTGSGRV) are excised as a propeptide. I122 carries the isoleucine amide modification.

It belongs to the sauvagine/corticotropin-releasing factor/urotensin I family. Expressed in corpora cardiaca (CC), corpora allata (CA), antennal lobe (AL) and gnathal ganglion (GNG) (at protein level). Expression in CC and CA detected in all animals, in GNG in most animals, expression in AL detected in few animals (at protein level).

The protein localises to the secreted. In terms of biological role, regulation of fluid secretion. This chain is Diuretic hormone 41, found in Agrotis ipsilon (Black cutworm moth).